An 843-amino-acid polypeptide reads, in one-letter code: Translation initiation factor IF-2 (843 aa).

Disordered regions lie at residues 55-185 and 209-228; these read AEAV…EDRD and KVEE…QVKV. Basic and acidic residues predominate over residues 62 to 106; it reads PQEKPKKSAPKKEEKPKEEVKKEAEEKVAASKKEEEKPQEKKSVE. Positions 114–128 are enriched in basic residues; that stretch reads LKKRRGLVIVKKKRP. The span at 129–141 shows a compositional bias: basic and acidic residues; sequence KVEPKVEEKEAKQ. Residues 156–165 show a composition bias toward basic residues; sequence LKRKPKKAKK. 2 stretches are compositionally biased toward basic and acidic residues: residues 171 to 185 and 209 to 221; these read KKNE…EDRD and KVEE…EPQK. In terms of domain architecture, tr-type G spans 342–511; that stretch reads ERPPVITIMG…LLQAEIMELK (170 aa). Residues 351–358 form a G1 region; that stretch reads GHVDHGKT. Residue 351–358 participates in GTP binding; the sequence is GHVDHGKT. The tract at residues 376–380 is G2; sequence GITQH. A G3 region spans residues 397–400; sequence DTPG. Residues 397-401 and 451-454 each bind GTP; these read DTPGH and NKID. The G4 stretch occupies residues 451-454; that stretch reads NKID. The segment at 487–489 is G5; that stretch reads SAK.

It belongs to the TRAFAC class translation factor GTPase superfamily. Classic translation factor GTPase family. IF-2 subfamily.

It localises to the cytoplasm. Functionally, one of the essential components for the initiation of protein synthesis. Protects formylmethionyl-tRNA from spontaneous hydrolysis and promotes its binding to the 30S ribosomal subunits. Also involved in the hydrolysis of GTP during the formation of the 70S ribosomal complex. This chain is Translation initiation factor IF-2, found in Nitratiruptor sp. (strain SB155-2).